The following is a 439-amino-acid chain: tRNA modification GTPase MnmE (439 aa).

3 residues coordinate (6S)-5-formyl-5,6,7,8-tetrahydrofolate: Arg20, Glu78, and Lys116. The TrmE-type G domain maps to 211 to 364 (GIYVAILGEP…LLSAIQKKVE (154 aa)). Residues 221–226 (NSGKST), 240–246 (SEYAGTT), and 265–268 (DTAG) contribute to the GTP site. Residues Ser225 and Thr246 each contribute to the Mg(2+) site. Lys439 contributes to the (6S)-5-formyl-5,6,7,8-tetrahydrofolate binding site.

Belongs to the TRAFAC class TrmE-Era-EngA-EngB-Septin-like GTPase superfamily. TrmE GTPase family. In terms of assembly, homodimer. Heterotetramer of two MnmE and two MnmG subunits. Requires K(+) as cofactor.

It localises to the cytoplasm. Exhibits a very high intrinsic GTPase hydrolysis rate. Involved in the addition of a carboxymethylaminomethyl (cmnm) group at the wobble position (U34) of certain tRNAs, forming tRNA-cmnm(5)s(2)U34. The polypeptide is tRNA modification GTPase MnmE (Ehrlichia ruminantium (strain Gardel)).